The sequence spans 119 residues: MIFGHGIDLQEISAVKKAYDRNPRFAKKVLTPKEWERFESLSGERQMSFLAGRWAGKEAFSKAWGTGIGAVGFKDIEILNNDKGAPVVTQSPFEGNVFISISHSGDFVQASVILEKNKR.

Positions 8 and 58 each coordinate Mg(2+).

Belongs to the P-Pant transferase superfamily. AcpS family. Mg(2+) serves as cofactor.

It is found in the cytoplasm. The catalysed reaction is apo-[ACP] + CoA = holo-[ACP] + adenosine 3',5'-bisphosphate + H(+). Transfers the 4'-phosphopantetheine moiety from coenzyme A to a Ser of acyl-carrier-protein. This is Holo-[acyl-carrier-protein] synthase from Streptococcus thermophilus (strain ATCC BAA-491 / LMD-9).